The following is a 413-amino-acid chain: Gamma-glutamyl phosphate reductase (413 aa).

It belongs to the gamma-glutamyl phosphate reductase family.

It localises to the cytoplasm. The enzyme catalyses L-glutamate 5-semialdehyde + phosphate + NADP(+) = L-glutamyl 5-phosphate + NADPH + H(+). The protein operates within amino-acid biosynthesis; L-proline biosynthesis; L-glutamate 5-semialdehyde from L-glutamate: step 2/2. In terms of biological role, catalyzes the NADPH-dependent reduction of L-glutamate 5-phosphate into L-glutamate 5-semialdehyde and phosphate. The product spontaneously undergoes cyclization to form 1-pyrroline-5-carboxylate. This chain is Gamma-glutamyl phosphate reductase, found in Lactococcus lactis subsp. cremoris (strain MG1363).